We begin with the raw amino-acid sequence, 220 residues long: Small ribosomal subunit protein mS23 (220 aa).

Belongs to the mitochondrion-specific ribosomal protein mS23 family. Component of the mitochondrial small ribosomal subunit (mt-SSU). Mature yeast 74S mitochondrial ribosomes consist of a small (37S) and a large (54S) subunit. The 37S small subunit contains a 15S ribosomal RNA (15S mt-rRNA) and at least 32 different proteins. The 54S large subunit contains a 21S rRNA (21S mt-rRNA) and at least 45 different proteins.

The protein localises to the mitochondrion. Its function is as follows. Component of the mitochondrial ribosome (mitoribosome), a dedicated translation machinery responsible for the synthesis of mitochondrial genome-encoded proteins, including at least some of the essential transmembrane subunits of the mitochondrial respiratory chain. The mitoribosomes are attached to the mitochondrial inner membrane and translation products are cotranslationally integrated into the membrane. In Schizosaccharomyces pombe (strain 972 / ATCC 24843) (Fission yeast), this protein is Small ribosomal subunit protein mS23 (rsm25).